The following is a 486-amino-acid chain: Amyloid-beta A4 precursor protein-binding family B member 3 (486 aa).

One can recognise a WW domain in the interval T29–W61. PID domains follow at residues E113 to L280 and S285 to S440. Residues T438–A460 are disordered.

Interacts with APP (via intracellular domain). Interacts with APLP1 and APLP2 (via intracellular domain).

It localises to the cytoplasm. The protein resides in the nucleus. Functionally, may modulate the internalization of amyloid-beta precursor protein. The protein is Amyloid-beta A4 precursor protein-binding family B member 3 of Mus musculus (Mouse).